Consider the following 118-residue polypeptide: ATP synthase subunit g, mitochondrial (118 aa).

As to quaternary structure, F-type ATP synthases have 2 components, the catalytic core F(1) and the membrane-embedded component F(0), linked together by a central stalk and a peripheral stalk. The central stalk, also called rotor shaft, is often seen as part of F(1). The peripheral stalk is seen as part of F(0). F(0) contains the membrane channel next to the rotor. F-type ATP synthases form dimers but each monomer functions independently in ATP generation. The dimer consists of 18 different polypeptides: ATP1 (subunit alpha, part of F(1), 3 molecules per monomer), ATP2 (subunit beta, part of F(1), 3 molecules per monomer), ATP3 (subunit gamma, part of the central stalk), ATP4 (subunit b, part of the peripheral stalk), ATP5/OSCP (subunit 5/OSCP, part of the peripheral stalk), ATP6 (subunit a, part of the peripheral stalk), ATP7 (subunit d, part of the peripheral stalk), ATP8 (subunit 8, part of the peripheral stalk), OLI1 (subunit c, part of the rotor, 10 molecules per monomer), ATP14 (subunit h, part of the peripheral stalk), ATP15 (subunit epsilon, part of the central stalk), ATP16 (subunit delta, part of the central stalk), ATP17 (subunit f, part of the peripheral stalk), ATP18 (subunit i/j, part of the peripheral stalk). Dimer-specific subunits are ATP19 (subunit k, at interface between monomers), ATP20 (subunit g, at interface between monomers), TIM11 (subunit e, at interface between monomers). Also contains subunit L.

The protein resides in the mitochondrion inner membrane. In terms of biological role, mitochondrial membrane ATP synthase (F(1)F(0) ATP synthase or Complex V) produces ATP from ADP in the presence of a proton gradient across the membrane which is generated by electron transport complexes of the respiratory chain. F-type ATP synthases consist of two structural domains, F(1) - containing the extramembraneous catalytic core, and F(0) - containing the membrane proton channel, linked together by a central stalk and a peripheral stalk. During catalysis, ATP synthesis in the catalytic domain of F(1) is coupled via a rotary mechanism of the central stalk subunits to proton translocation. Part of the complex F(0) domain Minor subunit located with subunit a/ATP6 in the membrane. Together with subunit e/TIM11, probably contributes to membrane curvature at the site of the ATP synthase dimer, ultimately contributing to formation of cristae. This is ATP synthase subunit g, mitochondrial from Pichia angusta (Yeast).